Consider the following 143-residue polypeptide: Ribonuclease H (143 aa).

Residues 1 to 140 (MKVEIYTDGA…VDALANLGIE (140 aa)) enclose the RNase H type-1 domain. Mg(2+) contacts are provided by aspartate 8, glutamate 46, aspartate 68, and aspartate 132.

This sequence belongs to the RNase H family. As to quaternary structure, monomer. Mg(2+) is required as a cofactor.

Its subcellular location is the cytoplasm. The enzyme catalyses Endonucleolytic cleavage to 5'-phosphomonoester.. Functionally, endonuclease that specifically degrades the RNA of RNA-DNA hybrids. In Legionella pneumophila (strain Lens), this protein is Ribonuclease H.